Consider the following 186-residue polypeptide: Glutathione peroxidase 7 (186 aa).

The signal sequence occupies residues methionine 1–alanine 18. The active site involves cysteine 56.

This sequence belongs to the glutathione peroxidase family.

It localises to the secreted. The enzyme catalyses 2 glutathione + H2O2 = glutathione disulfide + 2 H2O. Its function is as follows. It protects esophageal epithelia from hydrogen peroxide-induced oxidative stress. It suppresses acidic bile acid-induced reactive oxygen species (ROS) and protects against oxidative DNA damage and double-strand breaks. The chain is Glutathione peroxidase 7 (Gpx7) from Mus musculus (Mouse).